The following is a 154-amino-acid chain: UPF0260 protein NTHI1811 (154 aa).

This sequence belongs to the UPF0260 family.

This chain is UPF0260 protein NTHI1811, found in Haemophilus influenzae (strain 86-028NP).